Consider the following 101-residue polypeptide: Large ribosomal subunit protein bL21 (101 aa).

This sequence belongs to the bacterial ribosomal protein bL21 family. In terms of assembly, part of the 50S ribosomal subunit. Contacts protein L20.

In terms of biological role, this protein binds to 23S rRNA in the presence of protein L20. The chain is Large ribosomal subunit protein bL21 from Corynebacterium aurimucosum (strain ATCC 700975 / DSM 44827 / CIP 107346 / CN-1) (Corynebacterium nigricans).